The sequence spans 364 residues: MAVALAGARSPGAGAILSLRRLAPAAAAPVRLGGSGTPGTRRRRGIAMAAAASAPPAPADALPKGADSFFRTVISNMEKVYLSRNPTAKTILELVRSYDGDHICYDHFAFRTFGVDGYGIKSLAEFFTDFGYVPREELRFPAKKLRALWFSPPTNDGYTGTGVYGPLPRIFISELLVDELSPQSQDIIQKYIRTSGKGNKHATLASTSGELTWEKPIYSDFQVLSRESEYAAWTLVNGYALNHTTISTHRLISDIRSINKFNKFVEDNGFKLNSEGGILKVSPDGLLQQSSTVADSALFTFADGITESIPRSYIEFAERLVLPQFKDLPNDEVNEHHRRDGFEVGNADKIFESTSNDQLTRRSA.

The N-terminal 49 residues, 1–49 (MAVALAGARSPGAGAILSLRRLAPAAAAPVRLGGSGTPGTRRRRGIAMA), are a transit peptide targeting the chloroplast. 2-oxoadipate is bound by residues histidine 107 and arginine 111. A Fe(2+)-binding site is contributed by histidine 107. Histidine 243 is a binding site for Fe(2+). Glutamine 289 and tyrosine 313 together coordinate 2-oxoadipate. A Fe(2+)-binding site is contributed by glutamate 315.

The protein belongs to the 2-oxoadipate dioxygenase/decarboxylase family. It depends on Fe(2+) as a cofactor. In terms of tissue distribution, expressed in roots, stems, leaf sheaths, leaf blades, panicles, and endosperm.

It is found in the plastid. The protein resides in the chloroplast. Its subcellular location is the amyloplast. The catalysed reaction is 2-oxoadipate + O2 = (R)-2-hydroxyglutarate + CO2. The protein operates within amino-acid degradation. Its function is as follows. Catalyzes the decarboxylation and hydroxylation of 2-oxoadipate (2OA) to form D-2-hydroxyglutarate (D-2-HGA). Is involved in a D-lysine catabolic pathway. Involved in the regulation of starch synthesis and amyloplast development within the peripheral endosperm during the grain-filling stage. The chain is 2-oxoadipate dioxygenase/decarboxylase, chloroplastic/amyloplastic from Oryza sativa subsp. japonica (Rice).